A 381-amino-acid polypeptide reads, in one-letter code: Pentatricopeptide repeat-containing protein 2, mitochondrial (381 aa).

The stretch at 159–193 is one PPR repeat; it reads TSFNILMDMLFTKGKYERALQVLIEMKNQDVRFSK. Ser-375 bears the Phosphoserine mark.

It belongs to the PTCD2 family. As to expression, high expression in heart and liver and low expression in kidney, brain and testis.

Its subcellular location is the mitochondrion. Functionally, involved in mitochondrial RNA maturation and mitochondrial respiratory chain function. The sequence is that of Pentatricopeptide repeat-containing protein 2, mitochondrial (Ptcd2) from Mus musculus (Mouse).